Reading from the N-terminus, the 143-residue chain is Small ribosomal subunit protein uS9 (143 aa).

Position 2 is an N-acetylserine (Ser-2). The interval 123-143 (MPEPKKFGGKGARSRYQKSYR) is disordered. The span at 134 to 143 (ARSRYQKSYR) shows a compositional bias: basic residues.

This sequence belongs to the universal ribosomal protein uS9 family.

This is Small ribosomal subunit protein uS9 (RPS16) from Maudiozyma exigua (Yeast).